We begin with the raw amino-acid sequence, 105 residues long: Large ribosomal subunit protein uL24 (105 aa).

It belongs to the universal ribosomal protein uL24 family. Part of the 50S ribosomal subunit.

Its function is as follows. One of two assembly initiator proteins, it binds directly to the 5'-end of the 23S rRNA, where it nucleates assembly of the 50S subunit. In terms of biological role, one of the proteins that surrounds the polypeptide exit tunnel on the outside of the subunit. The polypeptide is Large ribosomal subunit protein uL24 (Francisella tularensis subsp. novicida (strain U112)).